The sequence spans 1303 residues: Ninein-like protein (1303 aa).

2 consecutive EF-hand domains span residues 8 to 43 (RYVA…LSLD) and 61 to 77 (RVNF…VLSR). Positions 107–135 (TKRYGRRSRPDKTDLELTADSDSLPFGTD) are disordered. EF-hand domains follow at residues 203–238 (VTDG…IGLK) and 240–275 (LEAE…PHDH). Positions 253, 255, 257, 259, and 264 each coordinate Ca(2+). The stretch at 464–590 (EYESEVLLEQ…CSELELLKSQ (127 aa)) forms a coiled coil. A compositionally biased stretch (polar residues) spans 592–617 (SGKRTRLSRSSLPANDWSNRRALTTE). The tract at residues 592–634 (SGKRTRLSRSSLPANDWSNRRALTTESDSDDPEMKKGTSPQVR) is disordered. 3 coiled-coil regions span residues 660-791 (ELAM…LEAE), 821-876 (LAVL…LSAR), and 919-1146 (SKQL…VQAQ). Residues 1156 to 1181 (EQMGSGTQEHASHLQTQLAEQQRRTQ) are disordered. The span at 1159-1175 (GSGTQEHASHLQTQLAE) shows a compositional bias: polar residues. Residues 1202–1278 (QEQYEKLMAS…EQRQKSAEKK (77 aa)) are a coiled coil.

It is found in the cytoplasm. Its subcellular location is the cytoskeleton. The protein localises to the microtubule organizing center. It localises to the centrosome. Required for the intracellular transport of organelles and vesicles, and is essential for the photoreceptor's outer segments formation, maintenance and function. The sequence is that of Ninein-like protein (Ninl) from Danio rerio (Zebrafish).